A 239-amino-acid chain; its full sequence is UDP-2,3-diacylglucosamine hydrolase (239 aa).

Asp8, His10, Asp41, Asn79, and His114 together coordinate Mn(2+). A substrate-binding site is contributed by 79–80; sequence NR. Positions 122, 160, 164, 167, and 195 each coordinate substrate. Positions 195 and 197 each coordinate Mn(2+).

This sequence belongs to the LpxH family. Mn(2+) serves as cofactor.

The protein resides in the cell inner membrane. The catalysed reaction is UDP-2-N,3-O-bis[(3R)-3-hydroxytetradecanoyl]-alpha-D-glucosamine + H2O = 2-N,3-O-bis[(3R)-3-hydroxytetradecanoyl]-alpha-D-glucosaminyl 1-phosphate + UMP + 2 H(+). It participates in glycolipid biosynthesis; lipid IV(A) biosynthesis; lipid IV(A) from (3R)-3-hydroxytetradecanoyl-[acyl-carrier-protein] and UDP-N-acetyl-alpha-D-glucosamine: step 4/6. Its function is as follows. Hydrolyzes the pyrophosphate bond of UDP-2,3-diacylglucosamine to yield 2,3-diacylglucosamine 1-phosphate (lipid X) and UMP by catalyzing the attack of water at the alpha-P atom. Involved in the biosynthesis of lipid A, a phosphorylated glycolipid that anchors the lipopolysaccharide to the outer membrane of the cell. The sequence is that of UDP-2,3-diacylglucosamine hydrolase from Sodalis glossinidius (strain morsitans).